The primary structure comprises 389 residues: Succinyl-diaminopimelate desuccinylase (389 aa).

His75 contacts Zn(2+). The active site involves Asp77. Asp108 lines the Zn(2+) pocket. The active-site Proton acceptor is Glu142. Zn(2+) contacts are provided by Glu143, Glu171, and His357.

This sequence belongs to the peptidase M20A family. DapE subfamily. In terms of assembly, homodimer. Zn(2+) serves as cofactor. Requires Co(2+) as cofactor.

The catalysed reaction is N-succinyl-(2S,6S)-2,6-diaminopimelate + H2O = (2S,6S)-2,6-diaminopimelate + succinate. The protein operates within amino-acid biosynthesis; L-lysine biosynthesis via DAP pathway; LL-2,6-diaminopimelate from (S)-tetrahydrodipicolinate (succinylase route): step 3/3. Its function is as follows. Catalyzes the hydrolysis of N-succinyl-L,L-diaminopimelic acid (SDAP), forming succinate and LL-2,6-diaminopimelate (DAP), an intermediate involved in the bacterial biosynthesis of lysine and meso-diaminopimelic acid, an essential component of bacterial cell walls. In Paracidovorax citrulli (strain AAC00-1) (Acidovorax citrulli), this protein is Succinyl-diaminopimelate desuccinylase.